The sequence spans 224 residues: Large ribosomal subunit protein uL3 (224 aa).

Gln-159 carries the post-translational modification N5-methylglutamine.

Belongs to the universal ribosomal protein uL3 family. In terms of assembly, part of the 50S ribosomal subunit. Forms a cluster with proteins L14 and L19. In terms of processing, methylated by PrmB.

Functionally, one of the primary rRNA binding proteins, it binds directly near the 3'-end of the 23S rRNA, where it nucleates assembly of the 50S subunit. The chain is Large ribosomal subunit protein uL3 from Herminiimonas arsenicoxydans.